We begin with the raw amino-acid sequence, 352 residues long: Cyclin-dependent kinase-like 1 (352 aa).

A Protein kinase domain is found at Y4–F287. Residues I10 to V18 and K33 each bind ATP. Residues K45–E51 carry the [NKR]KIAxRE motif. D126 serves as the catalytic Proton acceptor.

Belongs to the protein kinase superfamily. CMGC Ser/Thr protein kinase family. CDC2/CDKX subfamily.

It localises to the cytoplasm. The protein localises to the nucleus. The enzyme catalyses L-seryl-[protein] + ATP = O-phospho-L-seryl-[protein] + ADP + H(+). It carries out the reaction L-threonyl-[protein] + ATP = O-phospho-L-threonyl-[protein] + ADP + H(+). This Mus musculus (Mouse) protein is Cyclin-dependent kinase-like 1.